The following is a 194-amino-acid chain: ATP-dependent Clp protease proteolytic subunit 3 (194 aa).

Residue serine 96 is the Nucleophile of the active site. Residue histidine 121 is part of the active site.

It belongs to the peptidase S14 family. Fourteen ClpP subunits assemble into 2 heptameric rings which stack back to back to give a disk-like structure with a central cavity, resembling the structure of eukaryotic proteasomes.

The protein resides in the cytoplasm. It carries out the reaction Hydrolysis of proteins to small peptides in the presence of ATP and magnesium. alpha-casein is the usual test substrate. In the absence of ATP, only oligopeptides shorter than five residues are hydrolyzed (such as succinyl-Leu-Tyr-|-NHMec, and Leu-Tyr-Leu-|-Tyr-Trp, in which cleavage of the -Tyr-|-Leu- and -Tyr-|-Trp bonds also occurs).. Functionally, cleaves peptides in various proteins in a process that requires ATP hydrolysis. Has a chymotrypsin-like activity. Plays a major role in the degradation of misfolded proteins. The sequence is that of ATP-dependent Clp protease proteolytic subunit 3 from Prochlorococcus marinus (strain NATL2A).